We begin with the raw amino-acid sequence, 414 residues long: Gamma-glutamyl phosphate reductase (414 aa).

This sequence belongs to the gamma-glutamyl phosphate reductase family.

Its subcellular location is the cytoplasm. It catalyses the reaction L-glutamate 5-semialdehyde + phosphate + NADP(+) = L-glutamyl 5-phosphate + NADPH + H(+). It functions in the pathway amino-acid biosynthesis; L-proline biosynthesis; L-glutamate 5-semialdehyde from L-glutamate: step 2/2. Its function is as follows. Catalyzes the NADPH-dependent reduction of L-glutamate 5-phosphate into L-glutamate 5-semialdehyde and phosphate. The product spontaneously undergoes cyclization to form 1-pyrroline-5-carboxylate. This chain is Gamma-glutamyl phosphate reductase, found in Xanthomonas campestris pv. campestris (strain B100).